Here is a 441-residue protein sequence, read N- to C-terminus: MKISKTLLQHGRKVIDKYNLYVPTEGVFPKGYKVGSIASGVKKNGNLDLGVLVNTNTSRPSSAAAVFTTNKFKAAPVLTSKKVLESTQGNGINAIVVNSGCANAVTGELGMQDAQEMIDLVNRKIGKPNSTLVMSTGVIGQRLQMDKISAGIKNIFDNNALGNDFKSWLNIAKSINTTDTFPKLVSRQFELLNGQKYTLVGMAKGAGMICPNMATLLGYFVTDLPIASSALQKILRFATDRSFNCISVDGDMSTNDTICMIANGAVETDEITESSEEYEQVKSQVTEFAKTLAQLVVRDGEGSTKFVTVNVQNSLTFEDAKIIAESISNSMLVKTALYGQDANWGRILCAIGYAKLDNLKSLNTDSISVSFIATDNSEPRELKLVENGVPQLDVDEERAAQILALDDLEVLVDLKTGNESAQFWTCDLSHEYVTINGDYRS.

Substrate is bound by residues T177, K204, T215, E301, N436, and S441. T215 serves as the catalytic Nucleophile.

The protein belongs to the ArgJ family. As to quaternary structure, heterodimer of an alpha and a beta chain. Post-translationally, the alpha and beta chains are autoproteolytically processed from a single precursor protein within the mitochondrion.

Its subcellular location is the mitochondrion matrix. It catalyses the reaction N(2)-acetyl-L-ornithine + L-glutamate = N-acetyl-L-glutamate + L-ornithine. The catalysed reaction is L-glutamate + acetyl-CoA = N-acetyl-L-glutamate + CoA + H(+). Its pathway is amino-acid biosynthesis; L-arginine biosynthesis; L-ornithine and N-acetyl-L-glutamate from L-glutamate and N(2)-acetyl-L-ornithine (cyclic): step 1/1. The protein operates within amino-acid biosynthesis; L-arginine biosynthesis; N(2)-acetyl-L-ornithine from L-glutamate: step 1/4. Functionally, catalyzes two activities which are involved in the cyclic version of arginine biosynthesis: the synthesis of acetylglutamate from glutamate and acetyl-CoA, and of ornithine by transacetylation between acetylornithine and glutamate. The sequence is that of Arginine biosynthesis bifunctional protein ArgJ, mitochondrial from Candida glabrata (strain ATCC 2001 / BCRC 20586 / JCM 3761 / NBRC 0622 / NRRL Y-65 / CBS 138) (Yeast).